The sequence spans 395 residues: Endophilin-B2 (395 aa).

Residue methionine 1 is modified to N-acetylmethionine. Residues 1-27 are membrane-binding amphipathic helix; sequence MDFNMKKLASDAGIFFTRAVQFTEEKF. Position 10 is a phosphoserine (serine 10). In terms of domain architecture, BAR spans 24–287; sequence EEKFGQAEKT…LGRFPGTFVG (264 aa). Coiled-coil stretches lie at residues 116-132 and 206-240; these read IKVA…ERDF and ASAL…LLLE. An SH3 domain is found at 335 to 395; that stretch reads SGTRKARVLY…VPVTYLELLS (61 aa). Serine 395 carries the phosphoserine modification.

Belongs to the endophilin family. In terms of assembly, homodimer, and heterodimer with SH3GLB1.

The protein resides in the cytoplasm. In Bos taurus (Bovine), this protein is Endophilin-B2 (SH3GLB2).